The following is a 422-amino-acid chain: Cystine lyase CORI3 (422 aa).

This sequence belongs to the class-I pyridoxal-phosphate-dependent aminotransferase family. Homodimer. It depends on pyridoxal 5'-phosphate as a cofactor. In terms of tissue distribution, expressed in cotyledons, sepals, pistils, flower buds, phloem companion cells and vascular tissues of petiole, leaf, filament and fruit.

It carries out the reaction L-cystine + H2O = S-sulfanyl-L-cysteine + pyruvate + NH4(+). Its function is as follows. Possesses cystine lyase activity in vitro. Does not possess tyrosine aminotransferase, alanine aminotransferase, aspartate aminotransferase and tryptophan aminotransferase activities. This Arabidopsis thaliana (Mouse-ear cress) protein is Cystine lyase CORI3.